Consider the following 494-residue polypeptide: Probable cytochrome P450 515A1 (494 aa).

Residues 1–21 (MILGIILGLFIYIYLINIKFF) form a helical membrane-spanning segment. Cysteine 440 lines the heme pocket.

Belongs to the cytochrome P450 family. Requires heme as cofactor.

It localises to the membrane. In Dictyostelium discoideum (Social amoeba), this protein is Probable cytochrome P450 515A1 (cyp515A1).